The following is a 72-amino-acid chain: uncharacterized protein (72 aa).

Residues 46–66 form a helical membrane-spanning segment; that stretch reads AIFVFNLCFIPNLCVACIFNV.

It localises to the membrane. This is an uncharacterized protein from Saccharomyces cerevisiae (strain ATCC 204508 / S288c) (Baker's yeast).